The sequence spans 317 residues: Ribosomal RNA small subunit methyltransferase H (317 aa).

Residues 37–39 (AGH), Asp56, Phe85, Asp106, and Gln113 contribute to the S-adenosyl-L-methionine site.

The protein belongs to the methyltransferase superfamily. RsmH family.

The protein localises to the cytoplasm. It carries out the reaction cytidine(1402) in 16S rRNA + S-adenosyl-L-methionine = N(4)-methylcytidine(1402) in 16S rRNA + S-adenosyl-L-homocysteine + H(+). Specifically methylates the N4 position of cytidine in position 1402 (C1402) of 16S rRNA. This chain is Ribosomal RNA small subunit methyltransferase H, found in Lactococcus lactis subsp. lactis (strain IL1403) (Streptococcus lactis).